Here is a 66-residue protein sequence, read N- to C-terminus: Large ribosomal subunit protein uL29 (66 aa).

Belongs to the universal ribosomal protein uL29 family.

In Rhizobium etli (strain CIAT 652), this protein is Large ribosomal subunit protein uL29.